A 164-amino-acid chain; its full sequence is Thiol peroxidase (164 aa).

In terms of domain architecture, Thioredoxin spans 18 to 163 (VNEGDIAPNF…FEAALKAYRN (146 aa)). Residue Cys60 is the Cysteine sulfenic acid (-SOH) intermediate of the active site. Cys60 and Cys93 are joined by a disulfide.

The protein belongs to the peroxiredoxin family. Tpx subfamily. Homodimer.

The enzyme catalyses a hydroperoxide + [thioredoxin]-dithiol = an alcohol + [thioredoxin]-disulfide + H2O. Functionally, thiol-specific peroxidase that catalyzes the reduction of hydrogen peroxide and organic hydroperoxides to water and alcohols, respectively. Plays a role in cell protection against oxidative stress by detoxifying peroxides. This is Thiol peroxidase from Staphylococcus epidermidis (strain ATCC 35984 / DSM 28319 / BCRC 17069 / CCUG 31568 / BM 3577 / RP62A).